A 230-amino-acid polypeptide reads, in one-letter code: Lecithin retinol acyltransferase (230 aa).

Residues Met1–Ser194 are Cytoplasmic-facing. Residues Val50–Gln177 form the LRAT domain. Active-site residues include His60 and His72. Residue Cys161 is the Acyl-thioester intermediate of the active site. A helical transmembrane segment spans residues Val195–Thr215. The Lumenal portion of the chain corresponds to Thr216–Gly230.

This sequence belongs to the H-rev107 family. Hepatic stellate cells and endothelial cells (at protein level). Found at high levels in testis and liver, followed by retinal pigment epithelium, small intestine, prostate, pancreas and colon. Low expression observed in brain. In fetal tissues, expressed in retinal pigment epithelium and liver, and barely in the brain.

The protein localises to the endoplasmic reticulum membrane. The protein resides in the rough endoplasmic reticulum. It is found in the endosome. Its subcellular location is the multivesicular body. It localises to the cytoplasm. The protein localises to the perinuclear region. The enzyme catalyses all-trans-retinol--[retinol-binding protein] + a 1,2-diacyl-sn-glycero-3-phosphocholine = apo--[retinol-binding protein] + an all-trans-retinyl ester + a 2-acyl-sn-glycero-3-phosphocholine. It catalyses the reaction 1,2-dihexadecanoyl-sn-glycero-3-phosphocholine + all-trans-retinol = all-trans-retinyl hexadecanoate + 2-hexadecanoyl-sn-glycero-3-phosphocholine. It carries out the reaction 1,2-diheptanoyl-sn-glycero-3-phosphocholine + all-trans-retinol--[retinol-binding protein] = all-trans-retinyl heptanoate + 2-heptanoyl-sn-glycero-3-phosphocholine + apo--[retinol-binding protein]. The catalysed reaction is 1,2-dioctanoyl-sn-glycero-3-phosphocholine + all-trans-retinol--[retinol-binding protein] = 2-octanoyl-sn-glycero-3-phosphocholine + all-trans-retinyl octanoate + apo--[retinol-binding protein]. The enzyme catalyses all-trans-retinol--[retinol-binding protein] + 1,2-dihexadecanoyl-sn-glycero-3-phosphocholine = apo--[retinol-binding protein] + all-trans-retinyl hexadecanoate + 2-hexadecanoyl-sn-glycero-3-phosphocholine. It catalyses the reaction 1,2-didodecanoyl-sn-glycero-3-phosphocholine + all-trans-retinol--[retinol-binding protein] = 2-dodecanoyl-sn-glycero-3-phosphocholine + all-trans-retinyl dodecanoate + apo--[retinol-binding protein]. It functions in the pathway cofactor metabolism; retinol metabolism. With respect to regulation, inhibited by all-trans-retinyl alpha-bromoacetate and N-boc-L-biocytinyl-11-aminoundecane chloro-methyl ketone (BACMK). Functionally, transfers the acyl group from the sn-1 position of phosphatidylcholine to all-trans retinol, producing all-trans retinyl esters. Retinyl esters are storage forms of vitamin A. LRAT plays a critical role in vision. It provides the all-trans retinyl ester substrates for the isomerohydrolase which processes the esters into 11-cis-retinol in the retinal pigment epithelium; due to a membrane-associated alcohol dehydrogenase, 11 cis-retinol is oxidized and converted into 11-cis-retinaldehyde which is the chromophore for rhodopsin and the cone photopigments. Required for the survival of cone photoreceptors and correct rod photoreceptor cell morphology. This chain is Lecithin retinol acyltransferase, found in Homo sapiens (Human).